Here is a 148-residue protein sequence, read N- to C-terminus: MSDSVEMFTDGACKGNPGPGGWGVLMIYKGVEKELWGGERETTNNRMELMAAIQGLMSLKRECEVVLTTDSQYVMKGINEWMVNWKKRGWKTAAKEPVKNADLWQQLDEQVNRHKVTWKWVRGHIGHPGNERADQLANRGVDEVRAQR.

In terms of domain architecture, RNase H type-1 spans 1-142 (MSDSVEMFTD…ADQLANRGVD (142 aa)). Mg(2+) contacts are provided by aspartate 10, glutamate 48, aspartate 70, and aspartate 134.

The protein belongs to the RNase H family. In terms of assembly, monomer. Mg(2+) serves as cofactor.

The protein resides in the cytoplasm. It carries out the reaction Endonucleolytic cleavage to 5'-phosphomonoester.. In terms of biological role, endonuclease that specifically degrades the RNA of RNA-DNA hybrids. The polypeptide is Ribonuclease H (Pseudomonas putida (strain ATCC 700007 / DSM 6899 / JCM 31910 / BCRC 17059 / LMG 24140 / F1)).